Reading from the N-terminus, the 290-residue chain is 2-dehydropantoate 2-reductase (290 aa).

Residues 8-13, Asn-98, and Ala-124 each bind NADP(+); that span reads GPGAVG. Asn-98 is a binding site for substrate. Lys-175 serves as the catalytic Proton donor. Residues Asn-179 and Ser-244 each contribute to the substrate site. Glu-256 contributes to the NADP(+) binding site.

It belongs to the ketopantoate reductase family.

It localises to the cytoplasm. The catalysed reaction is (R)-pantoate + NADP(+) = 2-dehydropantoate + NADPH + H(+). Its pathway is cofactor biosynthesis; (R)-pantothenate biosynthesis; (R)-pantoate from 3-methyl-2-oxobutanoate: step 2/2. Its function is as follows. Catalyzes the NADPH-dependent reduction of ketopantoate into pantoic acid. The polypeptide is 2-dehydropantoate 2-reductase (Caulobacter vibrioides (strain ATCC 19089 / CIP 103742 / CB 15) (Caulobacter crescentus)).